Here is a 364-residue protein sequence, read N- to C-terminus: Putative transport protein BUsg_115 (364 aa).

9 helical membrane passes run 18-38 (IFII…ILGF), 40-60 (WASM…KFLG), 65-85 (VAVI…IVFL), 161-181 (GLFI…YWNG), 215-235 (ALGV…GLLI), 243-263 (LLMI…PILI), 280-300 (LLLI…PFFI), 309-329 (FLIL…GLFI), and 331-351 (PVVL…ISIA).

This sequence belongs to the autoinducer-2 exporter (AI-2E) (TC 2.A.86) family.

It localises to the cell membrane. This Buchnera aphidicola subsp. Schizaphis graminum (strain Sg) protein is Putative transport protein BUsg_115.